Reading from the N-terminus, the 263-residue chain is Taurine import ATP-binding protein TauB (263 aa).

One can recognise an ABC transporter domain in the interval 4 to 235; sequence LTAEAISLSF…RYAAGETVRS (232 aa). An ATP-binding site is contributed by 40-47; the sequence is GPSGCGKS.

Belongs to the ABC transporter superfamily. Taurine importer (TC 3.A.1.17.1) family. The complex is composed of two ATP-binding proteins (TauB), two transmembrane proteins (TauC) and a solute-binding protein (TauA).

The protein resides in the cell inner membrane. It carries out the reaction taurine(out) + ATP + H2O = taurine(in) + ADP + phosphate + H(+). Its function is as follows. Part of the ABC transporter complex TauABC involved in taurine import. Responsible for energy coupling to the transport system. This chain is Taurine import ATP-binding protein TauB, found in Pseudomonas aeruginosa (strain ATCC 15692 / DSM 22644 / CIP 104116 / JCM 14847 / LMG 12228 / 1C / PRS 101 / PAO1).